A 63-amino-acid chain; its full sequence is Cecropin-A2 (63 aa).

The N-terminal stretch at 1–23 (MNFYNIFVFVALILAITIGQSEA) is a signal peptide. Arginine 62 bears the Arginine amide mark.

The protein belongs to the cecropin family. In terms of tissue distribution, strongly expressed in larval, pupal and adult fat body and hemocytes after injection of bacteria. Maximal expression in the adult involves fat body cells of the head, thorax and abdomen.

The protein localises to the secreted. Its function is as follows. Cecropins have lytic and antibacterial activity against several Gram-positive and Gram-negative bacteria. In Drosophila melanogaster (Fruit fly), this protein is Cecropin-A2.